Consider the following 190-residue polypeptide: Potassium-transporting ATPase KdpC subunit (190 aa).

A helical membrane pass occupies residues 10–30 (TFLFLLLITGGVYPLLTTALG).

It belongs to the KdpC family. The system is composed of three essential subunits: KdpA, KdpB and KdpC.

The protein localises to the cell inner membrane. In terms of biological role, part of the high-affinity ATP-driven potassium transport (or Kdp) system, which catalyzes the hydrolysis of ATP coupled with the electrogenic transport of potassium into the cytoplasm. This subunit acts as a catalytic chaperone that increases the ATP-binding affinity of the ATP-hydrolyzing subunit KdpB by the formation of a transient KdpB/KdpC/ATP ternary complex. This Escherichia coli (strain SMS-3-5 / SECEC) protein is Potassium-transporting ATPase KdpC subunit.